The chain runs to 255 residues: Cytochrome c oxidase subunit 2 (255 aa).

Residues 1-16 form the signal peptide; it reads MFNLFPPFGANTAIFN. At 17 to 43 the chain is on the mitochondrial intermembrane side; the sequence is DAPQPWQVGFQDGASPTQEGITELHDS. A helical transmembrane segment spans residues 44-64; that stretch reads IFFYLVIICFGVLWVLSSVIV. The Mitochondrial matrix portion of the chain corresponds to 65–80; sequence NFNSNKSQLVYKYANH. Residues 81–101 form a helical membrane-spanning segment; that stretch reads GTLIELIWTITPALVLIAIAF. Over 102 to 255 the chain is Mitochondrial intermembrane; sequence PSFKLLYLMD…KYLAWIDSQA (154 aa). Cu cation contacts are provided by histidine 189, cysteine 224, glutamate 226, cysteine 228, histidine 232, and methionine 235. Glutamate 226 lines the Mg(2+) pocket.

Belongs to the cytochrome c oxidase subunit 2 family. Component of the cytochrome c oxidase (complex IV, CIV), a multisubunit enzyme composed of a catalytic core of 3 subunits and several supernumerary subunits. The complex exists as a monomer or a dimer and forms supercomplexes (SCs) in the inner mitochondrial membrane with ubiquinol-cytochrome c oxidoreductase (cytochrome b-c1 complex, complex III, CIII). Cu cation is required as a cofactor.

The protein localises to the mitochondrion inner membrane. The catalysed reaction is 4 Fe(II)-[cytochrome c] + O2 + 8 H(+)(in) = 4 Fe(III)-[cytochrome c] + 2 H2O + 4 H(+)(out). Functionally, component of the cytochrome c oxidase, the last enzyme in the mitochondrial electron transport chain which drives oxidative phosphorylation. The respiratory chain contains 3 multisubunit complexes succinate dehydrogenase (complex II, CII), ubiquinol-cytochrome c oxidoreductase (cytochrome b-c1 complex, complex III, CIII) and cytochrome c oxidase (complex IV, CIV), that cooperate to transfer electrons derived from NADH and succinate to molecular oxygen, creating an electrochemical gradient over the inner membrane that drives transmembrane transport and the ATP synthase. Cytochrome c oxidase is the component of the respiratory chain that catalyzes the reduction of oxygen to water. Electrons originating from reduced cytochrome c in the intermembrane space (IMS) are transferred via the dinuclear copper A center (CU(A)) of subunit 2 and heme A of subunit 1 to the active site in subunit 1, a binuclear center (BNC) formed by heme A3 and copper B (CU(B)). The BNC reduces molecular oxygen to 2 water molecules using 4 electrons from cytochrome c in the IMS and 4 protons from the mitochondrial matrix. The chain is Cytochrome c oxidase subunit 2 (COX2) from Mycosarcoma maydis (Corn smut fungus).